Here is a 337-residue protein sequence, read N- to C-terminus: Putative carbonic anhydrase-like protein 2 (337 aa).

The signal sequence occupies residues Met1–Gly16. The 258-residue stretch at Pro17–Ile274 folds into the Alpha-carbonic anhydrase domain. The active site involves Tyr140. Asn188 is a glycosylation site (N-linked (GlcNAc...) asparagine). A substrate-binding site is contributed by Thr212–Phe213.

Belongs to the alpha-carbonic anhydrase family.

The protein resides in the secreted. This chain is Putative carbonic anhydrase-like protein 2 (cah-2), found in Caenorhabditis elegans.